Here is a 531-residue protein sequence, read N- to C-terminus: Galactose/methyl galactoside import permease protein MglC (531 aa).

10 helical membrane-spanning segments follow: residues 193–213, 239–259, 267–287, 300–320, 326–346, 376–396, 424–444, 461–481, 483–503, and 505–525; these read FFLA…CIVV, MFYA…LSIG, VVTG…GLGP, VMSL…AGFF, IHPF…LFFG, LVTF…AWFI, FGVT…GAFF, LDAI…IGKL, GAVV…FLGI, and TNLQ…LDSV.

It belongs to the binding-protein-dependent transport system permease family. AraH/RbsC subfamily. As to quaternary structure, the complex is composed of one ATP-binding protein (MglA), two transmembrane proteins (MglC) and a solute-binding protein (MglB).

The protein localises to the cell membrane. Part of the ABC transporter complex MglABC involved in galactose/methyl galactoside import. Probably responsible for the translocation of the substrate across the membrane. This is Galactose/methyl galactoside import permease protein MglC (mglC) from Treponema pallidum (strain Nichols).